The chain runs to 961 residues: Gamma-tubulin small complex component GCP2 (961 aa).

The disordered stretch occupies residues 15-76; the sequence is NLHRSPKLAT…KPSIPPLKSE (62 aa). Over residues 43 to 54 the composition is skewed to polar residues; it reads LGSNVVSHPTRS. The segment covering 55-65 has biased composition (basic and acidic residues); the sequence is SPEKTTDKPAD.

This sequence belongs to the TUBGCP family. As to quaternary structure, component of the gamma-tubulin small complex (gamma-TuSC) composed of tubulin gamma chain, gamma-tubulin complex protein 2 (GCP2) and gamma-tubulin complex protein 3 (GCP3). Interacts with tubulin gamma chain.

The protein localises to the cytoplasm. It is found in the cytoskeleton. The protein resides in the flagellum axoneme. Its subcellular location is the flagellum basal body. Functionally, component of the gamma-tubulin small complex (gamma-TuSC) involved in microtubule (MT) nucleation for the formation of median bodies and in the biogenesis of flagella. Gamma-TuSC may be required for the correct positioning of EB1 within the trophozoites. This is Gamma-tubulin small complex component GCP2 from Giardia intestinalis (strain ATCC 50803 / WB clone C6) (Giardia lamblia).